The sequence spans 355 residues: UDP-3-O-acylglucosamine N-acyltransferase (355 aa).

The active-site Proton acceptor is histidine 246.

This sequence belongs to the transferase hexapeptide repeat family. LpxD subfamily. Homotrimer.

The enzyme catalyses a UDP-3-O-[(3R)-3-hydroxyacyl]-alpha-D-glucosamine + a (3R)-hydroxyacyl-[ACP] = a UDP-2-N,3-O-bis[(3R)-3-hydroxyacyl]-alpha-D-glucosamine + holo-[ACP] + H(+). It functions in the pathway bacterial outer membrane biogenesis; LPS lipid A biosynthesis. Functionally, catalyzes the N-acylation of UDP-3-O-acylglucosamine using 3-hydroxyacyl-ACP as the acyl donor. Is involved in the biosynthesis of lipid A, a phosphorylated glycolipid that anchors the lipopolysaccharide to the outer membrane of the cell. The chain is UDP-3-O-acylglucosamine N-acyltransferase from Polaromonas naphthalenivorans (strain CJ2).